Reading from the N-terminus, the 261-residue chain is Thiazole synthase (261 aa).

Lys97 serves as the catalytic Schiff-base intermediate with DXP. 1-deoxy-D-xylulose 5-phosphate contacts are provided by residues Gly158, 184 to 185 (AG), and 206 to 207 (AS).

Belongs to the ThiG family. Homotetramer. Forms heterodimers with either ThiH or ThiS.

The protein localises to the cytoplasm. It catalyses the reaction [ThiS sulfur-carrier protein]-C-terminal-Gly-aminoethanethioate + 2-iminoacetate + 1-deoxy-D-xylulose 5-phosphate = [ThiS sulfur-carrier protein]-C-terminal Gly-Gly + 2-[(2R,5Z)-2-carboxy-4-methylthiazol-5(2H)-ylidene]ethyl phosphate + 2 H2O + H(+). Its pathway is cofactor biosynthesis; thiamine diphosphate biosynthesis. Its function is as follows. Catalyzes the rearrangement of 1-deoxy-D-xylulose 5-phosphate (DXP) to produce the thiazole phosphate moiety of thiamine. Sulfur is provided by the thiocarboxylate moiety of the carrier protein ThiS. In vitro, sulfur can be provided by H(2)S. The polypeptide is Thiazole synthase (Corynebacterium diphtheriae (strain ATCC 700971 / NCTC 13129 / Biotype gravis)).